The following is a 392-amino-acid chain: Lysine acetyltransferase (392 aa).

The catalysed reaction is L-lysine + acetyl-CoA = N(6)-acetyl-L-lysine + CoA + H(+). It participates in amino-acid degradation; L-lysine degradation via acetylation pathway; glutarate from L-lysine: step 1/6. Activity is inhibited by 5-aminovalerate. Its function is as follows. Lysine N-6-acetyl transferase (LAT) that catalyzes the first step of the lysine degradation pathway. The polypeptide is Lysine acetyltransferase (Yarrowia lipolytica (strain CLIB 122 / E 150) (Yeast)).